The primary structure comprises 202 residues: MTTTVGIVVKDGVVLATDKRVTAGYYIAHKKGEKLWKIDDHVAATMSGGVADLQNILSFLTVRAREYKTQFRRPIPIRALVNYMSLILFYSRPYVYVVHSIIGGVDEEEGAVMYMVDWLGTVTKEKYVATGSGSPYAKGVLEVGYRGDLTVEEAVDLAINAIKAAIRNDPGSGEGIDVVTITKRDGFKRIFTTQQKLLIPEI.

Position 1 (M1) is a propeptide, removed in mature form; by autocatalysis. T2 (nucleophile) is an active-site residue.

This sequence belongs to the peptidase T1B family. The 20S proteasome core is composed of 14 alpha and 14 beta subunits that assemble into four stacked heptameric rings, resulting in a barrel-shaped structure. The two inner rings, each composed of seven catalytic beta subunits, are sandwiched by two outer rings, each composed of seven alpha subunits. The catalytic chamber with the active sites is on the inside of the barrel. Has a gated structure, the ends of the cylinder being occluded by the N-termini of the alpha-subunits. Is capped at one or both ends by the proteasome regulatory ATPase, PAN.

The protein localises to the cytoplasm. The enzyme catalyses Cleavage of peptide bonds with very broad specificity.. The formation of the proteasomal ATPase PAN-20S proteasome complex, via the docking of the C-termini of PAN into the intersubunit pockets in the alpha-rings, triggers opening of the gate for substrate entry. Interconversion between the open-gate and close-gate conformations leads to a dynamic regulation of the 20S proteasome proteolysis activity. Component of the proteasome core, a large protease complex with broad specificity involved in protein degradation. In Pyrobaculum arsenaticum (strain DSM 13514 / JCM 11321 / PZ6), this protein is Proteasome subunit beta 1.